A 278-amino-acid polypeptide reads, in one-letter code: Phosphatidylglycerol--prolipoprotein diacylglyceryl transferase (278 aa).

The next 3 membrane-spanning stretches (helical) occupy residues 21-41, 54-74, and 88-108; these read WYGI…QASV, IIFW…VIFQ, and IWQG…TGII. Residue arginine 136 coordinates a 1,2-diacyl-sn-glycero-3-phospho-(1'-sn-glycerol). 3 helical membrane passes run 176-196, 202-222, and 234-254; these read QPTF…LILL, IGDT…FVEG, and IRIA…IMIV.

Belongs to the Lgt family.

It is found in the cell membrane. It carries out the reaction L-cysteinyl-[prolipoprotein] + a 1,2-diacyl-sn-glycero-3-phospho-(1'-sn-glycerol) = an S-1,2-diacyl-sn-glyceryl-L-cysteinyl-[prolipoprotein] + sn-glycerol 1-phosphate + H(+). The protein operates within protein modification; lipoprotein biosynthesis (diacylglyceryl transfer). In terms of biological role, catalyzes the transfer of the diacylglyceryl group from phosphatidylglycerol to the sulfhydryl group of the N-terminal cysteine of a prolipoprotein, the first step in the formation of mature lipoproteins. This is Phosphatidylglycerol--prolipoprotein diacylglyceryl transferase from Staphylococcus saprophyticus subsp. saprophyticus (strain ATCC 15305 / DSM 20229 / NCIMB 8711 / NCTC 7292 / S-41).